We begin with the raw amino-acid sequence, 451 residues long: Magnesium transporter MgtE (451 aa).

Residues 1 to 285 (MVQNMTYDEL…TKAYVAAYRR (285 aa)) lie on the Cytoplasmic side of the membrane. Mg(2+) is bound by residues aspartate 64 and aspartate 96. 2 consecutive CBS domains span residues 140–203 (MTNR…VQDL) and 204–260 (MFTR…EADE). Positions 218, 228, 249, 252, 257, 260, and 261 each coordinate Mg(2+). The chain crosses the membrane as a helical span at residues 286-306 (LPWLILLLFIGLISGSIISYF). At 307–311 (EDALK) the chain is on the extracellular side. A helical transmembrane segment spans residues 312-332 (QVVALAFFMPMVSGMTGNTGT). The Cytoplasmic segment spans residues 333–371 (QSLAVVIRGLSKEEMNKKTIVRLIFREFRTSIFIGAVCS). Helical transmembrane passes span 372–392 (VLIA…FVVA) and 393–413 (SSLF…PIIL). At 414-427 (HKLKVDPAIASGPL) the chain is on the cytoplasmic side. Mg(2+) is bound by residues aspartate 419 and aspartate 433. A helical transmembrane segment spans residues 428–448 (ITTLNDILSLLIYFGIATAFI). Topologically, residues 449–451 (HSL) are extracellular.

The protein belongs to the SLC41A transporter family. Homodimer.

Its subcellular location is the cell membrane. The enzyme catalyses Mg(2+)(in) = Mg(2+)(out). With respect to regulation, binds cyclic di-AMP (c-di-AMP), which may regulate the transporter activity. Acts as a magnesium transporter. MgtE is the dominant transporter under rich-medium growth conditions, and it may provide the primary route of magnesium import in B.subtilis, while the other putative transport proteins are likely to be utilized for more-specialized growth conditions. This chain is Magnesium transporter MgtE, found in Bacillus subtilis (strain 168).